Reading from the N-terminus, the 148-residue chain is Large ribosomal subunit protein uL15 (148 aa).

Residues 1–40 show a composition bias toward basic and acidic residues; that stretch reads MADILQMHDLKPAPGANKDRIRVGRGEGSKGKTSGRGDKG. A disordered region spans residues 1–47; the sequence is MADILQMHDLKPAPGANKDRIRVGRGEGSKGKTSGRGDKGTKKRYQV.

This sequence belongs to the universal ribosomal protein uL15 family. As to quaternary structure, part of the 50S ribosomal subunit.

In terms of biological role, binds to the 23S rRNA. The sequence is that of Large ribosomal subunit protein uL15 from Bifidobacterium adolescentis (strain ATCC 15703 / DSM 20083 / NCTC 11814 / E194a).